Here is a 179-residue protein sequence, read N- to C-terminus: Replication restart protein DnaT (179 aa).

The tract at residues 156–179 (GGLPKRDVNTVSEPDSQIPPGFRG) is disordered.

This sequence belongs to the DnaT family. As to quaternary structure, homooligomerizes. Interacts with PriB. Component of the replication restart primosome. Primosome assembly occurs via a 'hand-off' mechanism. PriA binds to replication forks, subsequently PriB then DnaT bind; DnaT then displaces ssDNA to generate the helicase loading substrate.

In terms of biological role, involved in the restart of stalled replication forks, which reloads the replicative helicase on sites other than the origin of replication. Can function in multiple replication restart pathways. Displaces ssDNA from a PriB-ssDNA complex. Probably forms a spiral filament on ssDNA. The polypeptide is Replication restart protein DnaT (Escherichia coli O157:H7).